Here is a 220-residue protein sequence, read N- to C-terminus: MFLGTLYSFKTNTRTVCLLELAKLLDLQVDLVETYPHKFSADLAAKFPLQKLPVFIGADGFELSEVIAIVKYFYEKGKHNDKEGLGPVNEVEEAEMLKWMCFINFDIVTPQNVRPWVGMFRGNIPYEEKPFKESATRAIDSLKIPNELVKDRTYLVGDRFTLADLFFGSLLRIFFNSIIDEKTRKELPHLTRYYITMFHQAKLETYFPLELPLTVTVAKK.

The GST N-terminal domain occupies 2–81 (FLGTLYSFKT…YFYEKGKHND (80 aa)). In terms of domain architecture, GST C-terminal spans 89–216 (NEVEEAEMLK…FPLELPLTVT (128 aa)).

It belongs to the GST superfamily.

The protein resides in the cytoplasm. The catalysed reaction is RX + glutathione = an S-substituted glutathione + a halide anion + H(+). Functionally, involved in the oxidative stress response and detoxification. The chain is Putative glutathione S-transferase C1183.02 from Schizosaccharomyces pombe (strain 972 / ATCC 24843) (Fission yeast).